The chain runs to 151 residues: Ribosome maturation factor RimP (151 aa).

Belongs to the RimP family.

It is found in the cytoplasm. Functionally, required for maturation of 30S ribosomal subunits. This is Ribosome maturation factor RimP from Photobacterium profundum (strain SS9).